A 276-amino-acid chain; its full sequence is MARVTVSVLKDKKKRKEKISMLTAYDYSLAGMVDEAGIDMILVGDSLGNVVLGYDNTLAVTMDDMIHHSKTVVRASKNAMVVGDMPFLSYHISKKEAVRNAGRFIQEAGCSAVKLEGGSERVDTVKAILDAQIPVMGHIGLTPQSVHQFGGFKVQGKDLETAKKLVEDARALDQAGVYCIVLECVPSELARRVTEEISVPTIGIGAGPYCDGQVLVINDMLGMFRGFTPKFVRKFANLEPLIMEALKNYKAEVEAGTFPAEEHCFTIKEEVLDRLY.

Residues Asp-45 and Asp-84 each coordinate Mg(2+). Residues 45-46, Asp-84, and Lys-114 each bind 3-methyl-2-oxobutanoate; that span reads DS. Glu-116 provides a ligand contact to Mg(2+). The Proton acceptor role is filled by Glu-183.

This sequence belongs to the PanB family. In terms of assembly, homodecamer; pentamer of dimers. It depends on Mg(2+) as a cofactor.

The protein localises to the cytoplasm. The enzyme catalyses 3-methyl-2-oxobutanoate + (6R)-5,10-methylene-5,6,7,8-tetrahydrofolate + H2O = 2-dehydropantoate + (6S)-5,6,7,8-tetrahydrofolate. Its pathway is cofactor biosynthesis; (R)-pantothenate biosynthesis; (R)-pantoate from 3-methyl-2-oxobutanoate: step 1/2. In terms of biological role, catalyzes the reversible reaction in which hydroxymethyl group from 5,10-methylenetetrahydrofolate is transferred onto alpha-ketoisovalerate to form ketopantoate. The polypeptide is 3-methyl-2-oxobutanoate hydroxymethyltransferase (Syntrophomonas wolfei subsp. wolfei (strain DSM 2245B / Goettingen)).